Here is a 333-residue protein sequence, read N- to C-terminus: Taste receptor type 2 member 123 (333 aa).

At 1 to 13 (MFSQKINYSHLFT) the chain is on the extracellular side. Residue asparagine 7 is glycosylated (N-linked (GlcNAc...) asparagine). Residues 14–34 (FSITLYVEIVTGILGHGFIAL) traverse the membrane as a helical segment. At 35-60 (VNIMDWVKRRRISSVDQILTALALTR) the chain is on the cytoplasmic side. The helical transmembrane segment at 61–81 (FIYVLSMLICILLFMLCPHLP) threads the bilayer. At 82-90 (RRSEMLSAM) the chain is on the extracellular side. Residues 91 to 111 (GIFWVVNSHFSIWLTTCLGVF) traverse the membrane as a helical segment. Over 112–134 (YFLKIANFSNSFFLYLKWRVKKV) the chain is Cytoplasmic. The helical transmembrane segment at 135–155 (ILIIILASLIFLTLHILSLGI) threads the bilayer. Residues 156-205 (YDQFSIAAYVGNMSYSLTDLTQFSSTFLFSNSSNVFLITNSSHVFLPINS) lie on the Extracellular side of the membrane. 3 N-linked (GlcNAc...) asparagine glycosylation sites follow: asparagine 167, asparagine 186, and asparagine 195. The chain crosses the membrane as a helical span at residues 206–226 (LFMLIPFTVSLVAFLMLIFSL). Residues 227-253 (WKHHKKMQVNAKQPRDVSTMAHIKALQ) are Cytoplasmic-facing. Residues 254 to 274 (TVFSFLLLYAIYLLFLIIGIL) traverse the membrane as a helical segment. The Extracellular segment spans residues 275 to 281 (NLGLMEK). A helical membrane pass occupies residues 282-302 (IVILIFDHISGAVFPISHSFV). Residues 303 to 333 (LILGNSKLRQASLSVLPCLRCQSKDMDTMGL) are Cytoplasmic-facing.

It belongs to the G-protein coupled receptor T2R family. Expressed in subsets of taste receptor cells of the tongue and palate epithelium and exclusively in gustducin-positive cells. Expressed in the duodenum, antrum and fundus (part of the stomach).

Its subcellular location is the membrane. In terms of biological role, gustducin-coupled receptor implicated in the perception of bitter compounds in the oral cavity and the gastrointestinal tract. Signals through PLCB2 and the calcium-regulated cation channel TRPM5. The protein is Taste receptor type 2 member 123 (Tas2r123) of Mus musculus (Mouse).